The primary structure comprises 219 residues: Pyridoxal 5'-phosphate synthase subunit PDX2 (219 aa).

52-54 (GES) provides a ligand contact to L-glutamine. C87 serves as the catalytic Nucleophile. Residues R121 and 153 to 154 (IR) each bind L-glutamine. Catalysis depends on charge relay system residues H196 and E198.

Belongs to the glutaminase PdxT/SNO family. In the presence of Pdx1, forms a dodecamer of heterodimers. Only shows activity in the heterodimer.

The protein localises to the cytoplasm. The catalysed reaction is aldehydo-D-ribose 5-phosphate + D-glyceraldehyde 3-phosphate + L-glutamine = pyridoxal 5'-phosphate + L-glutamate + phosphate + 3 H2O + H(+). It catalyses the reaction L-glutamine + H2O = L-glutamate + NH4(+). It participates in cofactor biosynthesis; pyridoxal 5'-phosphate biosynthesis. Functionally, catalyzes the hydrolysis of glutamine to glutamate and ammonia as part of the biosynthesis of pyridoxal 5'-phosphate. The resulting ammonia molecule is channeled to the active site of Pdx1. This Plasmodium falciparum (isolate 3D7) protein is Pyridoxal 5'-phosphate synthase subunit PDX2.